The chain runs to 222 residues: Orotate phosphoribosyltransferase (222 aa).

A 5-phospho-alpha-D-ribose 1-diphosphate-binding site is contributed by Lys29. 37–38 contacts orotate; the sequence is FF. 5-phospho-alpha-D-ribose 1-diphosphate contacts are provided by residues 75 to 76, Arg101, Lys102, Lys105, His107, and 126 to 134; these read YK and DDVISAGTS. Residues Ser130 and Arg158 each contribute to the orotate site.

The protein belongs to the purine/pyrimidine phosphoribosyltransferase family. PyrE subfamily. Homodimer. Requires Mg(2+) as cofactor.

The catalysed reaction is orotidine 5'-phosphate + diphosphate = orotate + 5-phospho-alpha-D-ribose 1-diphosphate. It participates in pyrimidine metabolism; UMP biosynthesis via de novo pathway; UMP from orotate: step 1/2. Catalyzes the transfer of a ribosyl phosphate group from 5-phosphoribose 1-diphosphate to orotate, leading to the formation of orotidine monophosphate (OMP). In Polynucleobacter necessarius subsp. necessarius (strain STIR1), this protein is Orotate phosphoribosyltransferase.